The primary structure comprises 203 residues: Akirin-2 (203 aa).

Ser-18 and Ser-21 each carry phosphoserine. The short motif at Pro-22–Cys-27 is the Nuclear localization signal element. The residue at position 57 (Ser-57) is a Phosphoserine. The interval Pro-115–Lys-137 is disordered. Residues Leu-119–Pro-135 show a composition bias toward low complexity. Residues Ser-200–Ser-203 carry the SYVS motif motif.

It belongs to the akirin family. As to quaternary structure, homodimer. Interacts with IPO9; the interaction is direct. Associates with 20S and 26S proteasomes. Interacts with SMARCD1; promoting SWI/SNF complex recruitment. Interacts with NFKBIZ. Interacts with YWHAB. Polyubiquitinated. Polyubiquitination is dependent of UBR5 that extends pre-ubiquitinated AKIRIN2.

It localises to the nucleus. Its subcellular location is the cytoplasm. It is found in the membrane. Its function is as follows. Molecular adapter that acts as a bridge between a variety of multiprotein complexes, and which is involved in embryonic development, immunity, myogenesis and brain development. Plays a key role in nuclear protein degradation by promoting import of proteasomes into the nucleus: directly binds to fully assembled 20S proteasomes at one end and to nuclear import receptor IPO9 at the other end, bridging them together and mediating the import of pre-assembled proteasome complexes through the nuclear pore. Involved in innate immunity by regulating the production of interleukin-6 (IL6) downstream of Toll-like receptor (TLR): acts by bridging the NF-kappa-B inhibitor NFKBIZ and the SWI/SNF complex, leading to promote induction of IL6. Also involved in adaptive immunity by promoting B-cell activation. Involved in brain development: required for the survival and proliferation of cerebral cortical progenitor cells. Involved in myogenesis: required for skeletal muscle formation and skeletal development, possibly by regulating expression of muscle differentiation factors. This chain is Akirin-2, found in Bos taurus (Bovine).